A 427-amino-acid chain; its full sequence is 3-phosphoshikimate 1-carboxyvinyltransferase (427 aa).

Residues Lys-20, Ser-21, and Arg-25 each coordinate 3-phosphoshikimate. Lys-20 lines the phosphoenolpyruvate pocket. Positions 92 and 120 each coordinate phosphoenolpyruvate. Positions 166, 168, 312, and 339 each coordinate 3-phosphoshikimate. Gln-168 is a binding site for phosphoenolpyruvate. Asp-312 functions as the Proton acceptor in the catalytic mechanism. The phosphoenolpyruvate site is built by Arg-343 and Arg-385.

The protein belongs to the EPSP synthase family. Monomer.

The protein localises to the cytoplasm. It carries out the reaction 3-phosphoshikimate + phosphoenolpyruvate = 5-O-(1-carboxyvinyl)-3-phosphoshikimate + phosphate. It functions in the pathway metabolic intermediate biosynthesis; chorismate biosynthesis; chorismate from D-erythrose 4-phosphate and phosphoenolpyruvate: step 6/7. Catalyzes the transfer of the enolpyruvyl moiety of phosphoenolpyruvate (PEP) to the 5-hydroxyl of shikimate-3-phosphate (S3P) to produce enolpyruvyl shikimate-3-phosphate and inorganic phosphate. The sequence is that of 3-phosphoshikimate 1-carboxyvinyltransferase from Streptococcus thermophilus (strain ATCC BAA-491 / LMD-9).